The sequence spans 498 residues: ATP synthase subunit beta, chloroplastic (498 aa).

An ATP-binding site is contributed by 172–179 (GGAGVGKT).

It belongs to the ATPase alpha/beta chains family. In terms of assembly, F-type ATPases have 2 components, CF(1) - the catalytic core - and CF(0) - the membrane proton channel. CF(1) has five subunits: alpha(3), beta(3), gamma(1), delta(1), epsilon(1). CF(0) has four main subunits: a(1), b(1), b'(1) and c(9-12).

The protein resides in the plastid. It localises to the chloroplast thylakoid membrane. The catalysed reaction is ATP + H2O + 4 H(+)(in) = ADP + phosphate + 5 H(+)(out). Produces ATP from ADP in the presence of a proton gradient across the membrane. The catalytic sites are hosted primarily by the beta subunits. This Carica papaya (Papaya) protein is ATP synthase subunit beta, chloroplastic.